A 496-amino-acid chain; its full sequence is Glycerol kinase (496 aa).

Threonine 12 contacts ADP. Residues threonine 12, threonine 13, and serine 14 each coordinate ATP. Threonine 12 is a sn-glycerol 3-phosphate binding site. An ADP-binding site is contributed by arginine 16. Sn-glycerol 3-phosphate is bound by residues arginine 82, glutamate 83, and tyrosine 134. Residues arginine 82, glutamate 83, and tyrosine 134 each coordinate glycerol. Residue histidine 230 is modified to Phosphohistidine; by HPr. Aspartate 244 contacts sn-glycerol 3-phosphate. Positions 244 and 245 each coordinate glycerol. Threonine 266 and glycine 309 together coordinate ADP. Residues threonine 266, glycine 309, glutamine 313, and glycine 410 each contribute to the ATP site. ADP contacts are provided by glycine 410 and asparagine 414.

The protein belongs to the FGGY kinase family. In terms of assembly, homotetramer and homodimer (in equilibrium). Post-translationally, the phosphoenolpyruvate-dependent sugar phosphotransferase system (PTS), including enzyme I, and histidine-containing protein (HPr) are required for the phosphorylation, which leads to the activation of the enzyme.

The enzyme catalyses glycerol + ATP = sn-glycerol 3-phosphate + ADP + H(+). It participates in polyol metabolism; glycerol degradation via glycerol kinase pathway; sn-glycerol 3-phosphate from glycerol: step 1/1. With respect to regulation, activated by phosphorylation and inhibited by fructose 1,6-bisphosphate (FBP). In terms of biological role, key enzyme in the regulation of glycerol uptake and metabolism. Catalyzes the phosphorylation of glycerol to yield sn-glycerol 3-phosphate. The protein is Glycerol kinase of Bacillus cytotoxicus (strain DSM 22905 / CIP 110041 / 391-98 / NVH 391-98).